The chain runs to 378 residues: Long-chain-fatty-acid--luciferin-component ligase (378 aa).

This sequence belongs to the LuxE family.

The catalysed reaction is a long-chain fatty acid + L-cysteinyl-[protein] + ATP = an S-(long-chain fatty acyl)-L-cysteinyl-[protein] + AMP + diphosphate. It functions in the pathway lipid metabolism; fatty acid reduction for biolumincescence. In terms of biological role, acyl-protein synthetase activates tetradecanoic acid. It is a component of the fatty acid reductase complex responsible for converting tetradecanoic acid to the aldehyde which serves as substrate in the luciferase-catalyzed reaction. This is Long-chain-fatty-acid--luciferin-component ligase from Aliivibrio fischeri (Vibrio fischeri).